We begin with the raw amino-acid sequence, 115 residues long: Large ribosomal subunit protein uL24 (115 aa).

The protein belongs to the universal ribosomal protein uL24 family. Part of the 50S ribosomal subunit.

Its function is as follows. One of two assembly initiator proteins, it binds directly to the 5'-end of the 23S rRNA, where it nucleates assembly of the 50S subunit. Functionally, one of the proteins that surrounds the polypeptide exit tunnel on the outside of the subunit. The polypeptide is Large ribosomal subunit protein uL24 (Deinococcus deserti (strain DSM 17065 / CIP 109153 / LMG 22923 / VCD115)).